The primary structure comprises 158 residues: D-aminoacyl-tRNA deacylase (158 aa).

The Gly-cisPro motif, important for rejection of L-amino acids signature appears at 144 to 145; it reads GP.

It belongs to the DTD family. In terms of assembly, homodimer.

It is found in the cytoplasm. It catalyses the reaction glycyl-tRNA(Ala) + H2O = tRNA(Ala) + glycine + H(+). The enzyme catalyses a D-aminoacyl-tRNA + H2O = a tRNA + a D-alpha-amino acid + H(+). Functionally, an aminoacyl-tRNA editing enzyme that deacylates mischarged D-aminoacyl-tRNAs. Also deacylates mischarged glycyl-tRNA(Ala), protecting cells against glycine mischarging by AlaRS. Acts via tRNA-based rather than protein-based catalysis; rejects L-amino acids rather than detecting D-amino acids in the active site. By recycling D-aminoacyl-tRNA to D-amino acids and free tRNA molecules, this enzyme counteracts the toxicity associated with the formation of D-aminoacyl-tRNA entities in vivo and helps enforce protein L-homochirality. The chain is D-aminoacyl-tRNA deacylase from Corynebacterium kroppenstedtii (strain DSM 44385 / JCM 11950 / CIP 105744 / CCUG 35717).